Consider the following 552-residue polypeptide: Chaperonin GroEL (552 aa).

ATP is bound by residues 30–33 (TLGP), lysine 51, 87–91 (DGTTT), glycine 415, 480–482 (NAA), and aspartate 496.

This sequence belongs to the chaperonin (HSP60) family. As to quaternary structure, forms a cylinder of 14 subunits composed of two heptameric rings stacked back-to-back. Interacts with the co-chaperonin GroES.

It is found in the cytoplasm. It catalyses the reaction ATP + H2O + a folded polypeptide = ADP + phosphate + an unfolded polypeptide.. In terms of biological role, together with its co-chaperonin GroES, plays an essential role in assisting protein folding. The GroEL-GroES system forms a nano-cage that allows encapsulation of the non-native substrate proteins and provides a physical environment optimized to promote and accelerate protein folding. The chain is Chaperonin GroEL from Coxiella burnetii (strain RSA 331 / Henzerling II).